The sequence spans 586 residues: Aspartate--tRNA(Asp/Asn) ligase (586 aa).

E172 provides a ligand contact to L-aspartate. The tract at residues 196 to 199 (QLYK) is aspartate. An L-aspartate-binding site is contributed by R218. Residues 218–220 (RDE) and Q227 contribute to the ATP site. Position 446 (H446) interacts with L-aspartate. E480 lines the ATP pocket. Residue R487 coordinates L-aspartate. 532 to 535 (GIDR) contacts ATP.

The protein belongs to the class-II aminoacyl-tRNA synthetase family. Type 1 subfamily. In terms of assembly, homodimer.

It localises to the cytoplasm. It catalyses the reaction tRNA(Asx) + L-aspartate + ATP = L-aspartyl-tRNA(Asx) + AMP + diphosphate. In terms of biological role, aspartyl-tRNA synthetase with relaxed tRNA specificity since it is able to aspartylate not only its cognate tRNA(Asp) but also tRNA(Asn). Reaction proceeds in two steps: L-aspartate is first activated by ATP to form Asp-AMP and then transferred to the acceptor end of tRNA(Asp/Asn). This is Aspartate--tRNA(Asp/Asn) ligase from Borreliella burgdorferi (strain ATCC 35210 / DSM 4680 / CIP 102532 / B31) (Borrelia burgdorferi).